The chain runs to 333 residues: CRISPR-associated endonuclease Cas1 (333 aa).

Positions 162, 226, and 241 each coordinate Mn(2+).

The protein belongs to the CRISPR-associated endonuclease Cas1 family. In terms of assembly, homodimer, forms a heterotetramer with a Cas2 homodimer. It depends on Mg(2+) as a cofactor. Requires Mn(2+) as cofactor.

CRISPR (clustered regularly interspaced short palindromic repeat), is an adaptive immune system that provides protection against mobile genetic elements (viruses, transposable elements and conjugative plasmids). CRISPR clusters contain spacers, sequences complementary to antecedent mobile elements, and target invading nucleic acids. CRISPR clusters are transcribed and processed into CRISPR RNA (crRNA). Acts as a dsDNA endonuclease. Involved in the integration of spacer DNA into the CRISPR cassette. In Nanoarchaeum equitans (strain Kin4-M), this protein is CRISPR-associated endonuclease Cas1.